Consider the following 94-residue polypeptide: Small ribosomal subunit protein bS18 (94 aa).

Over residues 1-12 (MSEQNSRPQNSE) the composition is skewed to low complexity. A disordered region spans residues 1 to 29 (MSEQNSRPQNSERPQRSRRPQGGPRRRRK). Residues 16-29 (RSRRPQGGPRRRRK) are compositionally biased toward basic residues.

This sequence belongs to the bacterial ribosomal protein bS18 family. As to quaternary structure, part of the 30S ribosomal subunit. Forms a tight heterodimer with protein bS6.

Functionally, binds as a heterodimer with protein bS6 to the central domain of the 16S rRNA, where it helps stabilize the platform of the 30S subunit. This chain is Small ribosomal subunit protein bS18, found in Leuconostoc mesenteroides subsp. mesenteroides (strain ATCC 8293 / DSM 20343 / BCRC 11652 / CCM 1803 / JCM 6124 / NCDO 523 / NBRC 100496 / NCIMB 8023 / NCTC 12954 / NRRL B-1118 / 37Y).